The chain runs to 77 residues: MKISQVFIFVFLLMISVAWANEAYEEESNYLSERFDADVEEITPEFRGIRCPKSWKCKAFKQRVLKRLLAMLRQHAF.

The signal sequence occupies residues 1–20 (MKISQVFIFVFLLMISVAWA). Residues 21–47 (NEAYEEESNYLSERFDADVEEITPEFR) constitute a propeptide that is removed on maturation. A disulfide bridge connects residues cysteine 51 and cysteine 57.

In terms of tissue distribution, expressed by the venom gland.

Its subcellular location is the secreted. The protein localises to the target cell membrane. Functionally, disrupts cell membranes through the formation of pores. Has antibacterial activity against Gram-positive bacteria S.aureus (MIC=10 uM) and B.subtilis (MIC=0.5 uM) as well as Gram-negative bacteria P.fluorescens (MIC=1 uM) and E.coli (MIC=0.5 uM). Has hemolytic activity against human erythrocytes (EC(50)=7 uM). This Oxyopes takobius (Lynx spider) protein is Oxyopinin-4a.